The following is a 333-amino-acid chain: Biotin synthase (333 aa).

A Radical SAM core domain is found at 54 to 283 (FCSNTFDMCS…RAFIRLAGGR (230 aa)). The [4Fe-4S] cluster site is built by Cys72, Cys76, and Cys79. The [2Fe-2S] cluster site is built by Ser116, Cys148, Cys208, and Arg278.

It belongs to the radical SAM superfamily. Biotin synthase family. Homodimer. It depends on [4Fe-4S] cluster as a cofactor. [2Fe-2S] cluster is required as a cofactor.

It catalyses the reaction (4R,5S)-dethiobiotin + (sulfur carrier)-SH + 2 reduced [2Fe-2S]-[ferredoxin] + 2 S-adenosyl-L-methionine = (sulfur carrier)-H + biotin + 2 5'-deoxyadenosine + 2 L-methionine + 2 oxidized [2Fe-2S]-[ferredoxin]. It functions in the pathway cofactor biosynthesis; biotin biosynthesis; biotin from 7,8-diaminononanoate: step 2/2. Its function is as follows. Catalyzes the conversion of dethiobiotin (DTB) to biotin by the insertion of a sulfur atom into dethiobiotin via a radical-based mechanism. The chain is Biotin synthase from Brachyspira hyodysenteriae (strain ATCC 49526 / WA1).